A 244-amino-acid polypeptide reads, in one-letter code: Ribonuclease 3 (244 aa).

The 132-residue stretch at 5 to 136 (LAELERAIGI…LVGAIYLDQG (132 aa)) folds into the RNase III domain. Residue Glu49 coordinates Mg(2+). The active site involves Asp53. Residues Asp122 and Glu125 each coordinate Mg(2+). The active site involves Glu125. The region spanning 161 to 229 (DPTTRLQELM…ARKALAAWDK (69 aa)) is the DRBM domain.

This sequence belongs to the ribonuclease III family. As to quaternary structure, homodimer. It depends on Mg(2+) as a cofactor.

It localises to the cytoplasm. The enzyme catalyses Endonucleolytic cleavage to 5'-phosphomonoester.. Functionally, digests double-stranded RNA. Involved in the processing of primary rRNA transcript to yield the immediate precursors to the large and small rRNAs (23S and 16S). Processes some mRNAs, and tRNAs when they are encoded in the rRNA operon. Processes pre-crRNA and tracrRNA of type II CRISPR loci if present in the organism. The protein is Ribonuclease 3 of Chloroflexus aurantiacus (strain ATCC 29364 / DSM 637 / Y-400-fl).